Consider the following 408-residue polypeptide: Argininosuccinate synthase (408 aa).

14–22 lines the ATP pocket; that stretch reads AYSGGLDTS. Residues Tyr-92 and Ser-97 each coordinate L-citrulline. Gly-122 serves as a coordination point for ATP. 3 residues coordinate L-aspartate: Thr-124, Asn-128, and Asp-129. Asn-128 contacts L-citrulline. L-citrulline contacts are provided by Arg-132, Ser-181, Ser-190, Glu-266, and Tyr-278.

Belongs to the argininosuccinate synthase family. Type 1 subfamily. As to quaternary structure, homotetramer.

It localises to the cytoplasm. It carries out the reaction L-citrulline + L-aspartate + ATP = 2-(N(omega)-L-arginino)succinate + AMP + diphosphate + H(+). It functions in the pathway amino-acid biosynthesis; L-arginine biosynthesis; L-arginine from L-ornithine and carbamoyl phosphate: step 2/3. The sequence is that of Argininosuccinate synthase from Moorella thermoacetica (strain ATCC 39073 / JCM 9320).